The following is a 95-amino-acid chain: Co-chaperonin GroES (95 aa).

The protein belongs to the GroES chaperonin family. Heptamer of 7 subunits arranged in a ring. Interacts with the chaperonin GroEL.

The protein localises to the cytoplasm. Functionally, together with the chaperonin GroEL, plays an essential role in assisting protein folding. The GroEL-GroES system forms a nano-cage that allows encapsulation of the non-native substrate proteins and provides a physical environment optimized to promote and accelerate protein folding. GroES binds to the apical surface of the GroEL ring, thereby capping the opening of the GroEL channel. The polypeptide is Co-chaperonin GroES (Rickettsia prowazekii (strain Madrid E)).